Consider the following 230-residue polypeptide: CASP-like protein 2A2 (230 aa).

Residues 1 to 23 form a disordered region; it reads MEKKDEGNPPMAVMGSRDENEDV. Residues 1-29 are Cytoplasmic-facing; the sequence is MEKKDEGNPPMAVMGSRDENEDVKSTMRT. The chain crosses the membrane as a helical span at residues 30-50; that stretch reads AETMLRLVPVALCVSALVVML. At 51 to 71 the chain is on the extracellular side; sequence KNTQTNDYGSLSYSDLGAFRY. The chain crosses the membrane as a helical span at residues 72–92; sequence LVNANGICAGYSLLSAVIVAM. Topologically, residues 93–100 are cytoplasmic; it reads PRAWTMPQ. The helical transmembrane segment at 101 to 121 threads the bilayer; it reads AWTFFLLDQVLTYVILAAGTV. Residues 122-151 are Extracellular-facing; that stretch reads STEVLYLANKGDTSIAWSAACASFGGFCHK. A helical transmembrane segment spans residues 152-172; the sequence is ALISTVITFVAVIFYAALSLV. Residues 173 to 230 lie on the Cytoplasmic side of the membrane; that stretch reads SSYKLFSKYDAPVVTQSGEGIKTVTLGSPPPPPPPPPSNLHLHLHAKLACPAHNNSPN.

It belongs to the Casparian strip membrane proteins (CASP) family. In terms of assembly, homodimer and heterodimers.

It is found in the cell membrane. This Populus trichocarpa (Western balsam poplar) protein is CASP-like protein 2A2.